The sequence spans 173 residues: Photosystem I assembly protein Ycf3 (173 aa).

TPR repeat units follow at residues 35–68 (AFAY…EEDP), 72–105 (AFIL…NAKM), and 120–153 (GSIA…APNN).

This sequence belongs to the Ycf3 family.

Its subcellular location is the cellular thylakoid membrane. In terms of biological role, essential for the assembly of the photosystem I (PSI) complex. May act as a chaperone-like factor to guide the assembly of the PSI subunits. The chain is Photosystem I assembly protein Ycf3 from Synechococcus sp. (strain RCC307).